The sequence spans 481 residues: Proline--tRNA ligase (481 aa).

The protein belongs to the class-II aminoacyl-tRNA synthetase family. ProS type 3 subfamily. As to quaternary structure, homodimer.

Its subcellular location is the cytoplasm. The catalysed reaction is tRNA(Pro) + L-proline + ATP = L-prolyl-tRNA(Pro) + AMP + diphosphate. Catalyzes the attachment of proline to tRNA(Pro) in a two-step reaction: proline is first activated by ATP to form Pro-AMP and then transferred to the acceptor end of tRNA(Pro). This Chloroherpeton thalassium (strain ATCC 35110 / GB-78) protein is Proline--tRNA ligase.